An 89-amino-acid polypeptide reads, in one-letter code: Small ribosomal subunit protein uS15 (89 aa).

It belongs to the universal ribosomal protein uS15 family. Part of the 30S ribosomal subunit. Forms a bridge to the 50S subunit in the 70S ribosome, contacting the 23S rRNA.

Functionally, one of the primary rRNA binding proteins, it binds directly to 16S rRNA where it helps nucleate assembly of the platform of the 30S subunit by binding and bridging several RNA helices of the 16S rRNA. In terms of biological role, forms an intersubunit bridge (bridge B4) with the 23S rRNA of the 50S subunit in the ribosome. This is Small ribosomal subunit protein uS15 from Dictyoglomus thermophilum (strain ATCC 35947 / DSM 3960 / H-6-12).